Here is a 217-residue protein sequence, read N- to C-terminus: Thymidylate kinase (217 aa).

Position 7–14 (7–14) interacts with ATP; sequence GIDGAGKS.

The protein belongs to the thymidylate kinase family.

The catalysed reaction is dTMP + ATP = dTDP + ADP. Phosphorylation of dTMP to form dTDP in both de novo and salvage pathways of dTTP synthesis. The sequence is that of Thymidylate kinase from Pelodictyon phaeoclathratiforme (strain DSM 5477 / BU-1).